Consider the following 438-residue polypeptide: Tol-Pal system protein TolB (438 aa).

Residues Met-1 to Ala-35 form the signal peptide.

It belongs to the TolB family. As to quaternary structure, the Tol-Pal system is composed of five core proteins: the inner membrane proteins TolA, TolQ and TolR, the periplasmic protein TolB and the outer membrane protein Pal. They form a network linking the inner and outer membranes and the peptidoglycan layer.

The protein localises to the periplasm. In terms of biological role, part of the Tol-Pal system, which plays a role in outer membrane invagination during cell division and is important for maintaining outer membrane integrity. This Desulfotalea psychrophila (strain LSv54 / DSM 12343) protein is Tol-Pal system protein TolB.